The chain runs to 180 residues: Putative pre-16S rRNA nuclease (180 aa).

Residues 1 to 12 (MDAQERSERPDP) are compositionally biased toward basic and acidic residues. Residues 1–23 (MDAQERSERPDPATDPGRGRRLG) are disordered.

Belongs to the YqgF nuclease family.

It is found in the cytoplasm. Functionally, could be a nuclease involved in processing of the 5'-end of pre-16S rRNA. In Nocardia farcinica (strain IFM 10152), this protein is Putative pre-16S rRNA nuclease.